A 364-amino-acid chain; its full sequence is Chorismate synthase (364 aa).

Arg-48 serves as a coordination point for NADP(+). FMN contacts are provided by residues 126 to 128 (RSS), Gly-288, 303 to 307 (KPIAS), and Arg-329.

It belongs to the chorismate synthase family. Homotetramer. The cofactor is FMNH2.

It catalyses the reaction 5-O-(1-carboxyvinyl)-3-phosphoshikimate = chorismate + phosphate. The protein operates within metabolic intermediate biosynthesis; chorismate biosynthesis; chorismate from D-erythrose 4-phosphate and phosphoenolpyruvate: step 7/7. In terms of biological role, catalyzes the anti-1,4-elimination of the C-3 phosphate and the C-6 proR hydrogen from 5-enolpyruvylshikimate-3-phosphate (EPSP) to yield chorismate, which is the branch point compound that serves as the starting substrate for the three terminal pathways of aromatic amino acid biosynthesis. This reaction introduces a second double bond into the aromatic ring system. The sequence is that of Chorismate synthase from Desulfovibrio desulfuricans (strain ATCC 27774 / DSM 6949 / MB).